The chain runs to 223 residues: MTIAKMIDHTALKPDTTKEQILTLTKEAREYGFASVCVNPTWVKLSAEQLAGAESVVCTVIGFPLGANTPEVKAFEVKDAIQNGAKEVDMVINIGALKDKDNELVERDIRAVVDAAKGKALVKVIIETCLLTDEEKVRACEIAVKAGTDFVKTSTGFSTGGATAEDIALMRKTVGQNIGVKASGGVRTKEDVEKMIEAGATRIGASAGVAIVSGEKPAKPDNY.

D89 functions as the Proton donor/acceptor in the catalytic mechanism. K152 acts as the Schiff-base intermediate with acetaldehyde in catalysis. K181 (proton donor/acceptor) is an active-site residue.

This sequence belongs to the DeoC/FbaB aldolase family. DeoC type 1 subfamily.

It is found in the cytoplasm. It carries out the reaction 2-deoxy-D-ribose 5-phosphate = D-glyceraldehyde 3-phosphate + acetaldehyde. The protein operates within carbohydrate degradation; 2-deoxy-D-ribose 1-phosphate degradation; D-glyceraldehyde 3-phosphate and acetaldehyde from 2-deoxy-alpha-D-ribose 1-phosphate: step 2/2. Functionally, catalyzes a reversible aldol reaction between acetaldehyde and D-glyceraldehyde 3-phosphate to generate 2-deoxy-D-ribose 5-phosphate. The sequence is that of Deoxyribose-phosphate aldolase from Listeria welshimeri serovar 6b (strain ATCC 35897 / DSM 20650 / CCUG 15529 / CIP 8149 / NCTC 11857 / SLCC 5334 / V8).